A 388-amino-acid polypeptide reads, in one-letter code: Succinate--CoA ligase [ADP-forming] subunit beta (388 aa).

An ATP-grasp domain is found at 9-244 (KEILRKFGVA…PDEEDPKETQ (236 aa)). ATP contacts are provided by residues K46, 53 to 55 (GRG), E99, C102, and E107. N199 and D213 together coordinate Mg(2+). Residues N264 and 321–323 (GIM) contribute to the substrate site.

This sequence belongs to the succinate/malate CoA ligase beta subunit family. In terms of assembly, heterotetramer of two alpha and two beta subunits. The cofactor is Mg(2+).

It catalyses the reaction succinate + ATP + CoA = succinyl-CoA + ADP + phosphate. The catalysed reaction is GTP + succinate + CoA = succinyl-CoA + GDP + phosphate. The protein operates within carbohydrate metabolism; tricarboxylic acid cycle; succinate from succinyl-CoA (ligase route): step 1/1. Succinyl-CoA synthetase functions in the citric acid cycle (TCA), coupling the hydrolysis of succinyl-CoA to the synthesis of either ATP or GTP and thus represents the only step of substrate-level phosphorylation in the TCA. The beta subunit provides nucleotide specificity of the enzyme and binds the substrate succinate, while the binding sites for coenzyme A and phosphate are found in the alpha subunit. In Anaeromyxobacter dehalogenans (strain 2CP-1 / ATCC BAA-258), this protein is Succinate--CoA ligase [ADP-forming] subunit beta.